A 135-amino-acid polypeptide reads, in one-letter code: SGGLQVKNFDFTVGKFLTVGGFINNSPQRFSVNVGESMNSLSLHLDHRFNYGADQNTIVMNSTLKGDNGWETEQRSTNFTLSAGQYFEITLSYDINKFYIDILDGPNLEFPNRYSKEFLPFLSLAGDARLTLVKE.

Position 1 is an N-acetylserine (Ser1). A Galectin domain is found at Gly3–Glu135. Trp70–Ser76 contributes to the a beta-D-galactoside binding site.

As to quaternary structure, homodimer.

In terms of biological role, this protein binds beta-galactoside. Its physiological function is not yet known. The protein is Congerin-1 of Conger myriaster (Conger eel).